A 539-amino-acid chain; its full sequence is Chaperonin GroEL 1 (539 aa).

ATP contacts are provided by residues 30–33, lysine 51, 87–91, glycine 415, 480–482, and aspartate 496; these read TLGP, DGTTT, and NAA.

It belongs to the chaperonin (HSP60) family. As to quaternary structure, forms a cylinder of 14 subunits composed of two heptameric rings stacked back-to-back. Interacts with the co-chaperonin GroES.

It localises to the cytoplasm. It catalyses the reaction ATP + H2O + a folded polypeptide = ADP + phosphate + an unfolded polypeptide.. Its function is as follows. Together with its co-chaperonin GroES, plays an essential role in assisting protein folding. The GroEL-GroES system forms a nano-cage that allows encapsulation of the non-native substrate proteins and provides a physical environment optimized to promote and accelerate protein folding. The protein is Chaperonin GroEL 1 of Erythrobacter litoralis (strain HTCC2594).